The following is a 534-amino-acid chain: (E)-beta-farnesene synthase (534 aa).

Mg(2+) is bound by residues Asp-287, Asp-291, Asn-431, Ser-435, and Glu-439. Residues 287–291 (DDMMD) carry the DDXXD motif motif.

The protein belongs to the terpene synthase family. Requires Mg(2+) as cofactor. The cofactor is Co(2+). Mn(2+) is required as a cofactor.

The protein localises to the cytoplasm. It catalyses the reaction (2E,6E)-farnesyl diphosphate = (E)-beta-farnesene + diphosphate. Its pathway is secondary metabolite biosynthesis; terpenoid biosynthesis. In terms of biological role, sesquiterpene cyclase catalyzing the production of beta-farnesene and alpha-bergamotene in equal amounts from farnesyl diphosphate. Involved in indirect defense by producing volatile signals attracting natural enemies of herbivores. The chain is (E)-beta-farnesene synthase from Zea mays subsp. mexicana (Mexican teosinte).